The sequence spans 239 residues: Ribonuclease PH (239 aa).

Residues arginine 87 and glycine 125–arginine 127 contribute to the phosphate site.

Belongs to the RNase PH family. In terms of assembly, homohexameric ring arranged as a trimer of dimers.

The catalysed reaction is tRNA(n+1) + phosphate = tRNA(n) + a ribonucleoside 5'-diphosphate. Its function is as follows. Phosphorolytic 3'-5' exoribonuclease that plays an important role in tRNA 3'-end maturation. Removes nucleotide residues following the 3'-CCA terminus of tRNAs; can also add nucleotides to the ends of RNA molecules by using nucleoside diphosphates as substrates, but this may not be physiologically important. Probably plays a role in initiation of 16S rRNA degradation (leading to ribosome degradation) during starvation. The chain is Ribonuclease PH from Cyanothece sp. (strain PCC 7425 / ATCC 29141).